The sequence spans 418 residues: Elongation factor Tu, chloroplastic (418 aa).

A tr-type G domain is found at 10–214 (KPHVNIGTIG…NVDSYIPTPQ (205 aa)). Residues 19–26 (GHVDHGKT) are G1. 19 to 26 (GHVDHGKT) is a GTP binding site. T26 lines the Mg(2+) pocket. Residues 60–64 (GITIN) form a G2 region. The G3 stretch occupies residues 81-84 (DCPG). GTP-binding positions include 81 to 85 (DCPGH) and 136 to 139 (NKED). Residues 136-139 (NKED) form a G4 region. The G5 stretch occupies residues 174-176 (SAL).

Belongs to the TRAFAC class translation factor GTPase superfamily. Classic translation factor GTPase family. EF-Tu/EF-1A subfamily.

It localises to the plastid. The protein resides in the chloroplast. It catalyses the reaction GTP + H2O = GDP + phosphate + H(+). Its function is as follows. GTP hydrolase that promotes the GTP-dependent binding of aminoacyl-tRNA to the A-site of ribosomes during protein biosynthesis. This is Elongation factor Tu, chloroplastic (tufA) from Chlamydomonas reinhardtii (Chlamydomonas smithii).